We begin with the raw amino-acid sequence, 793 residues long: Methionine--tRNA ligase (793 aa).

The 'HIGH' region signature appears at 11 to 21 (PYVNNFPHLGN). Residues Cys142, Cys145, Cys155, and Cys158 each coordinate Zn(2+). The 'KMSKS' region motif lies at 334–338 (KFSKS). Residue Lys337 coordinates ATP. Basic and acidic residues predominate over residues 581 to 590 (SQKDRKKSEK). Residues 581–610 (SQKDRKKSEKGCSACKDSGSSKSDAAASSA) form a disordered region. The span at 591-610 (GCSACKDSGSSKSDAAASSA) shows a compositional bias: low complexity. Residues 622 to 727 (FSKKIALKTA…PWAAPGTPVI (106 aa)) enclose the tRNA-binding domain.

Belongs to the class-I aminoacyl-tRNA synthetase family. MetG type 1 subfamily. As to quaternary structure, homodimer. It depends on Zn(2+) as a cofactor.

Its subcellular location is the cytoplasm. The enzyme catalyses tRNA(Met) + L-methionine + ATP = L-methionyl-tRNA(Met) + AMP + diphosphate. Its function is as follows. Is required not only for elongation of protein synthesis but also for the initiation of all mRNA translation through initiator tRNA(fMet) aminoacylation. The polypeptide is Methionine--tRNA ligase (Treponema denticola (strain ATCC 35405 / DSM 14222 / CIP 103919 / JCM 8153 / KCTC 15104)).